Reading from the N-terminus, the 151-residue chain is Small heat shock protein HspD (151 aa).

The sHSP domain occupies arginine 28–alanine 138.

Belongs to the small heat shock protein (HSP20) family.

This is Small heat shock protein HspD (hspD) from Bradyrhizobium diazoefficiens (strain JCM 10833 / BCRC 13528 / IAM 13628 / NBRC 14792 / USDA 110).